A 439-amino-acid polypeptide reads, in one-letter code: L-tryptophan decarboxylase (439 aa).

This sequence belongs to the phosphatidylserine decarboxylase family.

The catalysed reaction is L-tryptophan + H(+) = tryptamine + CO2. Its pathway is secondary metabolite biosynthesis. Functionally, L-tryptophan decarboxylase; part of the gene cluster that mediates the biosynthesis of psilocybin, a psychotropic tryptamine-derived natural product. The first step in the pathway is the decarboxylation of L-tryptophan to tryptamine by the decarboxylase psiD. PsiD does not decarboxylate phenylalanine, tyrosine, or 5-hydroxy- L -tryptophan (5-HTP). 4-hydroxy-L-tryptophan is accepted as substrate by psiD as well. The cytochrome P450 monooxygenase psiH then converts tryptamine to 4-hydroxytryptamine. The kinase psiK catalyzes the 4-O-phosphorylation step by converting 4-hydroxytryptamine into norbaeocystin. The methyltransferase psiM then catalyzes iterative methyl transfer to the amino group of norbaeocystin to yield psilocybin via a monomethylated intermediate, baeocystin. 4-hydroxy-6-methyl-l-tryptophancan also be converted the decarboxylase PsiD, kinase PsiK, and methyltransferase PsiM into respectively 6-methyl-norbaeocystin, 6-methylbaeocystin, and 6-methylpsilocybin. In Psilocybe cyanescens, this protein is L-tryptophan decarboxylase.